Here is a 69-residue protein sequence, read N- to C-terminus: Large ribosomal subunit protein uL29 (69 aa).

The protein belongs to the universal ribosomal protein uL29 family.

This is Large ribosomal subunit protein uL29 from Granulibacter bethesdensis (strain ATCC BAA-1260 / CGDNIH1).